The primary structure comprises 198 residues: Probable GTP-binding protein EngB (198 aa).

An EngB-type G domain is found at 22–195; sequence DLPEIALAGR…WKAIHKFTKT (174 aa). GTP contacts are provided by residues 30 to 37, 57 to 61, 75 to 78, 142 to 145, and 174 to 176; these read GRSNVGKS, GKTQT, DVPG, TKAD, and FSS. Mg(2+) contacts are provided by serine 37 and threonine 59.

This sequence belongs to the TRAFAC class TrmE-Era-EngA-EngB-Septin-like GTPase superfamily. EngB GTPase family. It depends on Mg(2+) as a cofactor.

Functionally, necessary for normal cell division and for the maintenance of normal septation. The protein is Probable GTP-binding protein EngB of Bacillus anthracis (strain A0248).